The sequence spans 789 residues: Cadherin-6 (789 aa).

The first 18 residues, 1–18 (MRTYRYFLLLFWVGQPYP), serve as a signal peptide directing secretion. A propeptide spanning residues 19–53 (TFSNPLSKRTSGFPAKRRALELSANSRNELSRSKR) is cleaved from the precursor. 5 Cadherin domains span residues 54-159 (SWMW…EPIF), 160-268 (TKDV…PPRF), 269-383 (PQST…PPVF), 384-486 (SKPA…DNAP), and 487-608 (EFAE…LIHP). The Extracellular portion of the chain corresponds to 54-615 (SWMWNQFFLL…IHPTGLSTGA (562 aa)). N-linked (GlcNAc...) asparagine glycosylation occurs at N255. Residues 259–288 (TDVNDNPPRFPQSTYQFKTPESSPPGTPIG) are disordered. Over residues 269–279 (PQSTYQFKTPE) the composition is skewed to polar residues. 4 N-linked (GlcNAc...) asparagine glycosylation sites follow: N399, N437, N455, and N536. A helical membrane pass occupies residues 616–636 (LVAILLCIVILLVTVVLFAAL). Over 637–789 (RRQRKKEPLI…YGGMDSDKDS (153 aa)) the chain is Cytoplasmic. A phosphoserine mark is found at S785 and S789.

In terms of tissue distribution, highly expressed in kidney and brain.

Its subcellular location is the cell membrane. In terms of biological role, cadherins are calcium-dependent cell adhesion proteins. They preferentially interact with themselves in a homophilic manner in connecting cells; cadherins may thus contribute to the sorting of heterogeneous cell types. This chain is Cadherin-6 (Cdh6), found in Rattus norvegicus (Rat).